A 216-amino-acid polypeptide reads, in one-letter code: Cytidylate kinase (216 aa).

Residue 7–15 participates in ATP binding; it reads GPSGTGKST.

Belongs to the cytidylate kinase family. Type 1 subfamily.

Its subcellular location is the cytoplasm. It carries out the reaction CMP + ATP = CDP + ADP. The catalysed reaction is dCMP + ATP = dCDP + ADP. This chain is Cytidylate kinase, found in Chlamydia trachomatis serovar A (strain ATCC VR-571B / DSM 19440 / HAR-13).